Here is a 508-residue protein sequence, read N- to C-terminus: Pentatricopeptide repeat-containing protein At3g04130, mitochondrial (508 aa).

Residues 1 to 74 constitute a mitochondrion transit peptide; sequence MSWLIQNRIG…DSEDDVFKRL (74 aa). PPR repeat units follow at residues 120–150, 154–188, 189–219, 223–257, 258–292, 293–327, 328–363, 364–398, 400–434, and 436–470; these read SSDA…MRGD, TLNT…GLEK, NTES…LKSH, NAHT…GFRP, CVIS…GSPP, NSIT…GCKP, DSLF…GVSI, NTST…NLCN, DVHT…HHLS, and DEST…DITP.

Belongs to the PPR family. P subfamily.

The protein resides in the mitochondrion. This is Pentatricopeptide repeat-containing protein At3g04130, mitochondrial from Arabidopsis thaliana (Mouse-ear cress).